A 369-amino-acid polypeptide reads, in one-letter code: Superinfection exclusion protein (369 aa).

An N-terminal signal peptide occupies residues Met-1–Thr-15.

It belongs to the serpin family. Orthopoxvirus OPG040 subfamily. In terms of assembly, interacts with A56 protein.

The protein localises to the virion membrane. The protein resides in the host cell membrane. Functionally, prevents cell to cell fusion via its interaction with A56 protein. The A56-K2 complex associates with components of the entry fusion complex (EFC) presumably to avoid superinfection and syncytium formation. This chain is Superinfection exclusion protein (OPG040), found in Vaccinia virus (strain Ankara) (VACV).